The sequence spans 117 residues: Hydrogenase maturation factor HypA (117 aa).

His2 contacts Ni(2+). Zn(2+)-binding residues include Cys73, Cys76, Cys89, and Cys92.

Belongs to the HypA/HybF family.

Involved in the maturation of [NiFe] hydrogenases. Required for nickel insertion into the metal center of the hydrogenase. The protein is Hydrogenase maturation factor HypA of Shewanella baltica (strain OS195).